The primary structure comprises 351 residues: Phosphoribosylformylglycinamidine cyclo-ligase (351 aa).

Belongs to the AIR synthase family.

The protein localises to the cytoplasm. The catalysed reaction is 2-formamido-N(1)-(5-O-phospho-beta-D-ribosyl)acetamidine + ATP = 5-amino-1-(5-phospho-beta-D-ribosyl)imidazole + ADP + phosphate + H(+). It functions in the pathway purine metabolism; IMP biosynthesis via de novo pathway; 5-amino-1-(5-phospho-D-ribosyl)imidazole from N(2)-formyl-N(1)-(5-phospho-D-ribosyl)glycinamide: step 2/2. This chain is Phosphoribosylformylglycinamidine cyclo-ligase, found in Burkholderia ambifaria (strain ATCC BAA-244 / DSM 16087 / CCUG 44356 / LMG 19182 / AMMD) (Burkholderia cepacia (strain AMMD)).